The chain runs to 1022 residues: Probable beta-galactosidase B (1022 aa).

The first 20 residues, 1 to 20 (MARFPQLLFLLLASIGLLSA), serve as a signal peptide directing secretion. Asparagine 23 is a glycosylation site (N-linked (GlcNAc...) asparagine). Tyrosine 90 serves as a coordination point for substrate. N-linked (GlcNAc...) asparagine glycosylation is present at asparagine 100. Residues asparagine 135, alanine 136, glutamate 137, and asparagine 195 each coordinate substrate. Glutamate 196 acts as the Proton donor in catalysis. N-linked (GlcNAc...) asparagine glycosylation is present at asparagine 211. Residue tyrosine 265 participates in substrate binding. A disulfide bridge connects residues cysteine 271 and cysteine 324. Glutamate 308 (nucleophile) is an active-site residue. A substrate-binding site is contributed by tyrosine 373. N-linked (GlcNAc...) asparagine glycosylation is found at asparagine 411, asparagine 456, asparagine 541, asparagine 554, asparagine 626, asparagine 777, asparagine 790, asparagine 832, asparagine 880, and asparagine 881.

It belongs to the glycosyl hydrolase 35 family.

It localises to the secreted. The enzyme catalyses Hydrolysis of terminal non-reducing beta-D-galactose residues in beta-D-galactosides.. Cleaves beta-linked terminal galactosyl residues from gangliosides, glycoproteins, and glycosaminoglycans. This is Probable beta-galactosidase B (lacB) from Aspergillus terreus (strain NIH 2624 / FGSC A1156).